The primary structure comprises 561 residues: Putative transport protein YbjL (561 aa).

5 helical membrane-spanning segments follow: residues 8–28 (LLNG…LCLG), 32–52 (LGSI…LLGQ), 66–86 (FMLF…SIFF), 94–114 (MLAL…GKLF), and 158–178 (NLSL…IVGA). RCK C-terminal domains are found at residues 200-288 (RGLD…SFRN) and 292-373 (VFDR…RIGF). 5 helical membrane-spanning segments follow: residues 383-403 (LLAF…TFQF), 406-426 (FSFG…LGFM), 451-471 (VFMA…LGAI), 475-495 (MLIA…LFGA), and 540-560 (AIAN…WPGL).

The protein belongs to the AAE transporter (TC 2.A.81) family. YbjL subfamily.

The protein localises to the cell membrane. The protein is Putative transport protein YbjL of Escherichia coli O139:H28 (strain E24377A / ETEC).